A 464-amino-acid chain; its full sequence is Asparagine--tRNA ligase (464 aa).

It belongs to the class-II aminoacyl-tRNA synthetase family. Homodimer.

The protein localises to the cytoplasm. It catalyses the reaction tRNA(Asn) + L-asparagine + ATP = L-asparaginyl-tRNA(Asn) + AMP + diphosphate + H(+). This Xanthomonas campestris pv. campestris (strain 8004) protein is Asparagine--tRNA ligase.